A 233-amino-acid chain; its full sequence is 5'-methylthioadenosine/S-adenosylhomocysteine nucleosidase (233 aa).

The active-site Proton acceptor is the glutamate 12. Substrate is bound by residues glycine 78, isoleucine 156, and 177–178 (ME). Aspartate 201 (proton donor) is an active-site residue.

This sequence belongs to the PNP/UDP phosphorylase family. MtnN subfamily.

The catalysed reaction is S-adenosyl-L-homocysteine + H2O = S-(5-deoxy-D-ribos-5-yl)-L-homocysteine + adenine. It catalyses the reaction S-methyl-5'-thioadenosine + H2O = 5-(methylsulfanyl)-D-ribose + adenine. It carries out the reaction 5'-deoxyadenosine + H2O = 5-deoxy-D-ribose + adenine. The protein operates within amino-acid biosynthesis; L-methionine biosynthesis via salvage pathway; S-methyl-5-thio-alpha-D-ribose 1-phosphate from S-methyl-5'-thioadenosine (hydrolase route): step 1/2. In terms of biological role, catalyzes the irreversible cleavage of the glycosidic bond in both 5'-methylthioadenosine (MTA) and S-adenosylhomocysteine (SAH/AdoHcy) to adenine and the corresponding thioribose, 5'-methylthioribose and S-ribosylhomocysteine, respectively. Also cleaves 5'-deoxyadenosine, a toxic by-product of radical S-adenosylmethionine (SAM) enzymes, into 5-deoxyribose and adenine. This chain is 5'-methylthioadenosine/S-adenosylhomocysteine nucleosidase, found in Listeria monocytogenes serotype 4b (strain F2365).